A 430-amino-acid chain; its full sequence is Asparagine--tRNA ligase (430 aa).

This sequence belongs to the class-II aminoacyl-tRNA synthetase family. Homodimer.

It localises to the cytoplasm. It catalyses the reaction tRNA(Asn) + L-asparagine + ATP = L-asparaginyl-tRNA(Asn) + AMP + diphosphate + H(+). The chain is Asparagine--tRNA ligase from Staphylococcus aureus (strain MRSA252).